Reading from the N-terminus, the 1408-residue chain is TSET complex member tstA (1408 aa).

Disordered stretches follow at residues 259 to 347 (FWPT…SIIA), 998 to 1055 (QQSS…AVGS), and 1091 to 1139 (SSSS…TNLN). Residues 266–308 (NNNNNNNNQQINNNNNNNNNNNNNNNNNNNNNNNNNNNNNQNN) show a composition bias toward low complexity. Residues 309 to 318 (LINGISSMNL) are compositionally biased toward polar residues. Composition is skewed to low complexity over residues 319–347 (SSIT…SIIA) and 998–1051 (QQSS…ISTS).

It belongs to the TPLATE family. Component of the TSET complex, a heterohexamer composed of tstA, tstB, tstC, tstD, tstE and tstF, which may act in plasma membrane turnover. tstA, tstB, tstC and tstD are likely to be the core complex members with tstE and tstF acting as associated scaffold proteins.

The polypeptide is TSET complex member tstA (Dictyostelium discoideum (Social amoeba)).